Reading from the N-terminus, the 297-residue chain is Probable GTP 3',8-cyclase (297 aa).

A Radical SAM core domain is found at 4–227 (RYGRQIRSFR…MQNRKKYVID (224 aa)). Arg-13 is a GTP binding site. [4Fe-4S] cluster contacts are provided by Cys-20 and Cys-24. Tyr-26 lines the S-adenosyl-L-methionine pocket. Residue Cys-27 participates in [4Fe-4S] cluster binding. Lys-61 is a GTP binding site. Gly-65 serves as a coordination point for S-adenosyl-L-methionine. Thr-91 provides a ligand contact to GTP. Ser-115 contributes to the S-adenosyl-L-methionine binding site. Residue Lys-152 coordinates GTP. The [4Fe-4S] cluster site is built by Cys-243 and Cys-246. Residue 248-250 (RIR) coordinates GTP. Cys-260 serves as a coordination point for [4Fe-4S] cluster.

It belongs to the radical SAM superfamily. MoaA family. [4Fe-4S] cluster serves as cofactor.

The enzyme catalyses GTP + AH2 + S-adenosyl-L-methionine = (8S)-3',8-cyclo-7,8-dihydroguanosine 5'-triphosphate + 5'-deoxyadenosine + L-methionine + A + H(+). It functions in the pathway cofactor biosynthesis; molybdopterin biosynthesis. Functionally, catalyzes the cyclization of GTP to (8S)-3',8-cyclo-7,8-dihydroguanosine 5'-triphosphate. This chain is Probable GTP 3',8-cyclase, found in Methanococcus maripaludis (strain DSM 14266 / JCM 13030 / NBRC 101832 / S2 / LL).